A 31-amino-acid chain; its full sequence is Cytochrome b6-f complex subunit 6 (31 aa).

The helical transmembrane segment at 3-23 (IAIDYFLLVGFCFAFTSGLYL) threads the bilayer.

This sequence belongs to the PetL family. As to quaternary structure, the 4 large subunits of the cytochrome b6-f complex are cytochrome b6, subunit IV (17 kDa polypeptide, PetD), cytochrome f and the Rieske protein, while the 4 small subunits are PetG, PetL, PetM and PetN. The complex functions as a dimer.

Its subcellular location is the plastid. It localises to the chloroplast thylakoid membrane. Component of the cytochrome b6-f complex, which mediates electron transfer between photosystem II (PSII) and photosystem I (PSI), cyclic electron flow around PSI, and state transitions. PetL is important for photoautotrophic growth as well as for electron transfer efficiency and stability of the cytochrome b6-f complex. The chain is Cytochrome b6-f complex subunit 6 from Trieres chinensis (Marine centric diatom).